Reading from the N-terminus, the 397-residue chain is S-adenosylmethionine synthase (397 aa).

Residue His17 participates in ATP binding. Asp19 contributes to the Mg(2+) binding site. Position 45 (Glu45) interacts with K(+). The L-methionine site is built by Glu58 and Gln101. The tract at residues 101–111 (QSPDIAQGVDK) is flexible loop. ATP is bound by residues 176-178 (DGK), 243-244 (RF), Asp252, 258-259 (RK), and Lys279. Residue Asp252 coordinates L-methionine. L-methionine is bound at residue Lys283.

This sequence belongs to the AdoMet synthase family. Homotetramer; dimer of dimers. The cofactor is Mg(2+). K(+) is required as a cofactor.

It is found in the cytoplasm. It carries out the reaction L-methionine + ATP + H2O = S-adenosyl-L-methionine + phosphate + diphosphate. The protein operates within amino-acid biosynthesis; S-adenosyl-L-methionine biosynthesis; S-adenosyl-L-methionine from L-methionine: step 1/1. Functionally, catalyzes the formation of S-adenosylmethionine (AdoMet) from methionine and ATP. The overall synthetic reaction is composed of two sequential steps, AdoMet formation and the subsequent tripolyphosphate hydrolysis which occurs prior to release of AdoMet from the enzyme. This is S-adenosylmethionine synthase from Staphylococcus aureus (strain MRSA252).